A 299-amino-acid chain; its full sequence is Glycine--tRNA ligase alpha subunit (299 aa).

Belongs to the class-II aminoacyl-tRNA synthetase family. Tetramer of two alpha and two beta subunits.

The protein resides in the cytoplasm. It catalyses the reaction tRNA(Gly) + glycine + ATP = glycyl-tRNA(Gly) + AMP + diphosphate. The protein is Glycine--tRNA ligase alpha subunit of Laribacter hongkongensis (strain HLHK9).